The primary structure comprises 126 residues: Glycine cleavage system H protein (126 aa).

A Lipoyl-binding domain is found at 24-105 (TLTVGITDHA…AYGVWLFKIK (82 aa)). K65 is modified (N6-lipoyllysine).

This sequence belongs to the GcvH family. In terms of assembly, the glycine cleavage system is composed of four proteins: P, T, L and H. (R)-lipoate serves as cofactor.

The glycine cleavage system catalyzes the degradation of glycine. The H protein shuttles the methylamine group of glycine from the P protein to the T protein. This chain is Glycine cleavage system H protein, found in Burkholderia cenocepacia (strain ATCC BAA-245 / DSM 16553 / LMG 16656 / NCTC 13227 / J2315 / CF5610) (Burkholderia cepacia (strain J2315)).